We begin with the raw amino-acid sequence, 246 residues long: ATP synthase subunit a, chloroplastic (246 aa).

Helical transmembrane passes span 35 to 55 (GQVF…ALVG), 94 to 114 (VPYI…GALI), 133 to 153 (INVT…AGLS), and 202 to 222 (VFAL…GLFA).

It belongs to the ATPase A chain family. As to quaternary structure, F-type ATPases have 2 components, CF(1) - the catalytic core - and CF(0) - the membrane proton channel. CF(1) has five subunits: alpha(3), beta(3), gamma(1), delta(1), epsilon(1). CF(0) has four main subunits: a, b, b' and c.

The protein localises to the plastid. It is found in the chloroplast thylakoid membrane. Its function is as follows. Key component of the proton channel; it plays a direct role in the translocation of protons across the membrane. This chain is ATP synthase subunit a, chloroplastic, found in Rhodomonas salina (Cryptomonas salina).